An 809-amino-acid chain; its full sequence is E3 ubiquitin-protein ligase RSP5 (809 aa).

Residues 1 to 105 (MPSSISVKLV…GHLDEDTATS (105 aa)) enclose the C2 domain. Disordered regions lie at residues 99–122 (DEDT…KKSN), 139–240 (PSSS…RRTD), and 257–298 (WKRP…DNSS). Residues 108–122 (RPREETITRDLKKSN) are compositionally biased toward basic and acidic residues. The segment covering 139-148 (PSSSPHSQAP) has biased composition (polar residues). Residues 149–183 (SGHTASSSTNTSSTTRTNGHSTSSTRNHSTSHPSR) are compositionally biased toward low complexity. Residues 184–196 (GTAQAVESTLQSG) are compositionally biased toward polar residues. Residues 197–219 (TTAATNTATTSHRSTNSTSSATR) are compositionally biased toward low complexity. WW domains are found at residues 229-262 (GRLP…RPTL), 331-364 (GELP…DPRR), and 387-420 (GPLP…DPRL). Lys258 participates in a covalent cross-link: Glycyl lysine isopeptide (Lys-Gly) (interchain with G-Cter in ubiquitin). One can recognise an HECT domain in the interval 705–809 (YRGYQESDEV…VEETIGFGQE (105 aa)). The active-site Glycyl thioester intermediate is Cys777.

The protein belongs to the RSP5/NEDD4 family. Component of the RSP5-BUL1/2 ubiquitin ligase complex composed of at least RSP5 and BUL1 or BUL2. Component of the RSP5-UBA1-UBC5 ubiquitin ligase complex composed of E3 RSP5, E1 UBA1 and E2 UBC5. Also forms a ternary complex with RUP1 and UBP2. Interacts (via WW domains) with LSB1. Interacts (via WW domains) with PIN3/LSB2. Interacts (via WW domains) with RCR1 (via PY motifs). Interacts with UBP2; the interaction is direct. Interacts with HSE1. Interacts with LAS17. Interacts with ROG3. Interacts with ROD1. Interacts with RVS167. Interacts with ubiquitin. In terms of processing, the ubiquitination appears to be the result of an intramolecular transfer of ubiquitin.

Its subcellular location is the cytoplasm. It localises to the nucleus. The protein resides in the cytoskeleton. It is found in the actin patch. It catalyses the reaction S-ubiquitinyl-[E2 ubiquitin-conjugating enzyme]-L-cysteine + [acceptor protein]-L-lysine = [E2 ubiquitin-conjugating enzyme]-L-cysteine + N(6)-ubiquitinyl-[acceptor protein]-L-lysine.. Its pathway is protein modification; protein ubiquitination. Its function is as follows. E3 ubiquitin-protein ligase which accepts ubiquitin from an E2 ubiquitin-conjugating enzyme in the form of a thioester and then directly transfers the ubiquitin to targeted substrates. Component of a RSP5 ubiquitin ligase complex which specifies polyubiquitination and intracellular trafficking of the general amino acid permease GAP1 as well as other cell surface proteins like GAP1, FUR4, MAL61, PMA1 and STE2. The RSP5-BUL1/2 complex is also necessary for the heat-shock element (HSE)-mediated gene expression, nitrogen starvation GLN3-dependent transcription, pressure-induced differential regulation of the two tryptophan permeases TAT1 and TAT2 and sorting efficiency into multivesicular bodies. The RSP5-UBA1-UBC5 ubiquitin ligase complex ubiquitinates RPO21 forming 'Lys-63'-linked polyubiquitin chains. Plays a role in tolerance to o-dinitrobenzene. Involved in actin cytoskeleton organization and dynamics. Ubiquitinates the LAS17-binding proteins LSB1 and PIN3/LSB2 without directing them for degradation and affects LAS17 levels in a SLA1-dependent and LSB1/2-independent manner. Also involved in the degradation of non-functional 18S rRNAs in response to stalled ribosomes by mediating polyubiquitination of monoubiquitinated RPS3/uS3: mediates formation of 'Lys-63'-linked polyubiquitin chains on monoubiquitined RPS3/uS3, promoting the degradation of non-functional 18S rRNAs. The chain is E3 ubiquitin-protein ligase RSP5 (RSP5) from Saccharomyces cerevisiae (strain ATCC 204508 / S288c) (Baker's yeast).